The chain runs to 713 residues: Methionine--tRNA ligase (713 aa).

A 'HIGH' region motif is present at residues 31–41 (PYANGSIHLGH). 4 residues coordinate Zn(2+): Cys-162, Cys-165, Cys-175, and Cys-178. A 'KMSKS' region motif is present at residues 348-352 (KMSKS). An ATP-binding site is contributed by Lys-351. The region spanning 609-713 (DFAKIDLRIV…DGAKAGMRVK (105 aa)) is the tRNA-binding domain.

The protein belongs to the class-I aminoacyl-tRNA synthetase family. MetG type 1 subfamily. In terms of assembly, homodimer. Zn(2+) is required as a cofactor.

It localises to the cytoplasm. The catalysed reaction is tRNA(Met) + L-methionine + ATP = L-methionyl-tRNA(Met) + AMP + diphosphate. Functionally, is required not only for elongation of protein synthesis but also for the initiation of all mRNA translation through initiator tRNA(fMet) aminoacylation. In Colwellia psychrerythraea (strain 34H / ATCC BAA-681) (Vibrio psychroerythus), this protein is Methionine--tRNA ligase.